We begin with the raw amino-acid sequence, 493 residues long: Galactose-1-phosphate uridylyltransferase 2 (493 aa).

It belongs to the galactose-1-phosphate uridylyltransferase type 2 family.

Its subcellular location is the cytoplasm. The catalysed reaction is alpha-D-galactose 1-phosphate + UDP-alpha-D-glucose = alpha-D-glucose 1-phosphate + UDP-alpha-D-galactose. It functions in the pathway carbohydrate metabolism; galactose metabolism. The chain is Galactose-1-phosphate uridylyltransferase 2 (galT2) from Streptococcus pneumoniae serotype 4 (strain ATCC BAA-334 / TIGR4).